The primary structure comprises 364 residues: DNA replication and repair protein RecF (364 aa).

33–40 provides a ligand contact to ATP; sequence GENGSGKT.

It belongs to the RecF family.

The protein localises to the cytoplasm. Functionally, the RecF protein is involved in DNA metabolism; it is required for DNA replication and normal SOS inducibility. RecF binds preferentially to single-stranded, linear DNA. It also seems to bind ATP. The protein is DNA replication and repair protein RecF of Rickettsia felis (strain ATCC VR-1525 / URRWXCal2) (Rickettsia azadi).